The sequence spans 391 residues: MTRSIAGELQQLREQGLYRSLRTVAGSQGSRVVAEGREVVLLCSNNYLGLADHPSLKRAAVEAVERYGTGSGASRLVSGTMELHAALEERLARFKGTEAALVFNSGYAANSGIIPALVGRGDVVFSDRLNHASIVDGCLLSRARFVRYPHNDMNALERLLAEHRGAGRMLIVTDGVFSMDGDLAPLPALVALKRQYGALLMVDDAHGTGVLGESGRGSAEQFEVAADIDLQMGTLGKALGGFGAYVAASAEVVELLINRARSFIFSTSLPPAVLAAARAALDLVDSPEGKALRRRLARSAALFRDALQEAGFDTMGSETQIVPALVGEAEPAMTFTRRLLEEGFYVQGIRPPTVPAGTCRLRCTLMATHDESDLERAVAAMARIGKELGIV.

Residue R19 coordinates substrate. Position 106-107 (106-107) interacts with pyridoxal 5'-phosphate; sequence GY. H131 contacts substrate. Pyridoxal 5'-phosphate contacts are provided by S178, H206, and T234. Position 237 is an N6-(pyridoxal phosphate)lysine (K237). T353 provides a ligand contact to substrate.

The protein belongs to the class-II pyridoxal-phosphate-dependent aminotransferase family. BioF subfamily. Homodimer. It depends on pyridoxal 5'-phosphate as a cofactor.

The enzyme catalyses 6-carboxyhexanoyl-[ACP] + L-alanine + H(+) = (8S)-8-amino-7-oxononanoate + holo-[ACP] + CO2. It functions in the pathway cofactor biosynthesis; biotin biosynthesis. Functionally, catalyzes the decarboxylative condensation of pimeloyl-[acyl-carrier protein] and L-alanine to produce 8-amino-7-oxononanoate (AON), [acyl-carrier protein], and carbon dioxide. In Geobacter sulfurreducens (strain ATCC 51573 / DSM 12127 / PCA), this protein is 8-amino-7-oxononanoate synthase.